The sequence spans 264 residues: Short chain dehydrogenase CPUR_05429 (264 aa).

The NADP(+) site is built by Ile24, Asp70, Asn97, and Arg130. Residues Ser146 and Ser147 each act as proton donor in the active site. Positions 161, 165, and 196 each coordinate NADP(+). Tyr161 (proton acceptor) is an active-site residue. Lys165 serves as the catalytic Lowers pKa of active site Tyr.

It belongs to the short-chain dehydrogenases/reductases (SDR) family.

The protein operates within pigment biosynthesis. Short chain dehydrogenase; part of the ergochrome gene cluster responsible for the typical purple-black color of the ergot sclerotia. The ergochrome gene cluster produces several ergot pigments including the yellow ergochrome secalonic acid and its derivatives, as well as the red anthraquinones endocrocin and clavorubin. The pathway begins with the synthesis of atrochrysone thioester by the polyketide synthase (PKS) CPUR_05437. The atrochrysone carboxyl ACP thioesterase CPUR_05436 then breaks the thioester bond and releases the atrochrysone carboxylic acid from CPUR_05437. The atrochrysone carboxylic acid is then converted to atrochrysone which is further transformed into emodin anthrone. The next step is performed by the anthrone oxygenase CPUR_05434 that catalyzes the oxidation of emodinanthrone to emodin. Emodin is further modified to yield monodictyphenone via several steps involving CPUR_05427, CPUR_05428, CPUR_05429 and CPUR_05430. The short chain dehydrogenase/reductase CPUR_05418 then catalyzes the C-5 ketoreduction to give the xanthone skeleton of the monomeric units. Ergochromes formation requires further dimerization steps of different xanthone units, probably catalyzed by the cytochrome P450 monooxygenase CPUR_05419. CPUR_05425, CPUR_05426 and CPUR_05431 are unique to Claviceps, thus it is likely that they are involved in further modification of xanthone units or in their dimerization. The yellow ergochromes and the red anthraquinone pigments endocrocin and clavorubin are products from the same PKS derived precursors and the latter are likely shunt products in the pathway of xanthone biosynthesis. It is proposed that atrochrysone carboxylic acid released from the PKS CPUR_05437 can also be converted to endocrocin anthrone which is further oxidized into endocrocin by CPUR_05435. Endocrocin could be then modified to clavorubin, possibly by CPUR_05423 and CPUR_05431. Clavorubin is the principal anthraquinone metabolite produced by the cluster with a much higher yield compared to endocrocin. The protein is Short chain dehydrogenase CPUR_05429 of Claviceps purpurea (strain 20.1) (Ergot fungus).